A 168-amino-acid chain; its full sequence is Plastocyanin A, chloroplastic (168 aa).

The transit peptide at Met-1 to Ala-69 directs the protein to the chloroplast. The Plastocyanin-like domain occupies Ile-70 to Asn-168. His-106, Cys-153, His-156, and Met-161 together coordinate Cu cation.

It belongs to the plastocyanin family. Cu(2+) serves as cofactor.

Its subcellular location is the plastid. It localises to the chloroplast thylakoid membrane. Its function is as follows. Participates in electron transfer between P700 and the cytochrome b6-f complex in photosystem I. This is Plastocyanin A, chloroplastic (PETE) from Populus nigra (Lombardy poplar).